The sequence spans 72 residues: Dermaseptin AA-3-4 (72 aa).

The first 22 residues, 1 to 22 (MAFLKKSLFLVLFLGLVSLSIC), serve as a signal peptide directing secretion. A propeptide spanning residues 23-43 (DEEKRENEDEEEQEDDEQSEE) is cleaved from the precursor. The segment at 24-45 (EEKRENEDEEEQEDDEQSEEKR) is disordered. Positions 30 to 41 (EDEEEQEDDEQS) are enriched in acidic residues.

It belongs to the frog skin active peptide (FSAP) family. Expressed by the skin glands.

It is found in the secreted. Its function is as follows. Possesses a potent antimicrobial activity against Gram-positive and Gram-negative bacteria. Probably acts by disturbing membrane functions with its amphipathic structure. This is Dermaseptin AA-3-4 from Agalychnis annae (Blue-sided leaf frog).